The sequence spans 201 residues: MCCLTPVLALALVLGAPWQALHGAPLAELSGDHDFQLFLHKNLEFTRKIRGDVAALQRAVCDTFQLCTEEELQLVQPDPHLVQAPLDQCHKRGFQAEVCFTQIRAGLHAYHDSLGAVLRLLPNHTTLVETLQLDAANLSSNIQQQMEDLGLDTVTLPAEQRSPPPTFSGPFQQQVGGFFILANFQRFLETAYRALRHLARL.

Residues 1–23 (MCCLTPVLALALVLGAPWQALHG) form the signal peptide. Disulfide bonds link cysteine 61/cysteine 67 and cysteine 89/cysteine 99. Residues asparagine 123 and asparagine 137 are each glycosylated (N-linked (GlcNAc...) asparagine).

This sequence belongs to the IL-6 superfamily.

It is found in the secreted. In terms of biological role, hematopoietic growth factor that stimulates the proliferation and colony formation of normal and transformed avian cells of the myeloid lineage. The polypeptide is Myelomonocytic growth factor (Gallus gallus (Chicken)).